The chain runs to 1896 residues: von Willebrand factor A domain-containing protein 8 (1896 aa).

A mitochondrion-targeting transit peptide spans 1–18 (MHSRILFKGTAAAVAARR). 439–446 (GAKGCGKS) serves as a coordination point for ATP. The disordered stretch occupies residues 1536-1564 (GLDVSSPKHGKIDAKNAPHVGGNQWAGGT). Positions 1705-1887 (RLRVLADVSG…KEIPQILQQI (183 aa)) constitute a VWFA domain.

In terms of assembly, monomer.

It is found in the mitochondrion. In terms of biological role, exhibits ATPase activity in vitro. The sequence is that of von Willebrand factor A domain-containing protein 8 (vwa8) from Danio rerio (Zebrafish).